Reading from the N-terminus, the 189-residue chain is Casparian strip membrane protein 2 (189 aa).

A disordered region spans residues 1–21 (MKVSTIESGEISKGASSPRKG). At 1-25 (MKVSTIESGEISKGASSPRKGMKRG) the chain is on the cytoplasmic side. The helical transmembrane segment at 26–46 (LSIMDFILRIFAAMSTLGSAL) threads the bilayer. The Extracellular portion of the chain corresponds to 47–73 (SMGTAKQTMPFATRFVRFKVSFHDLPT). The chain crosses the membrane as a helical span at residues 74-94 (FLFFVTANSIVCGYLALSLVL). The Cytoplasmic portion of the chain corresponds to 95 to 108 (SFFHIVRTISVKSR). A helical membrane pass occupies residues 109-129 (ILLVFLDTVMFGLLTSGASAA). Over 130 to 163 (AAIVYVAHYGNPSANWFPFCQQYNSFCGRISGSL) the chain is Extracellular. A helical transmembrane segment spans residues 164-184 (VGSFIAVVIFMILILMSGISI). Over 185–189 (SKSKH) the chain is Cytoplasmic.

It belongs to the Casparian strip membrane proteins (CASP) family. Homodimer and heterodimers.

Its subcellular location is the cell membrane. Functionally, regulates membrane-cell wall junctions and localized cell wall deposition. Required for establishment of the Casparian strip membrane domain (CSD) and the subsequent formation of Casparian strips, a cell wall modification of the root endodermis that determines an apoplastic barrier between the intraorganismal apoplasm and the extraorganismal apoplasm and prevents lateral diffusion. The chain is Casparian strip membrane protein 2 from Medicago truncatula (Barrel medic).